Reading from the N-terminus, the 307-residue chain is Malate dehydrogenase (307 aa).

NAD(+) is bound by residues G8–G13 and D32. Substrate is bound by residues R81 and R87. NAD(+) is bound by residues N94 and V117–N119. Substrate-binding residues include N119 and R150. H174 (proton acceptor) is an active-site residue.

The protein belongs to the LDH/MDH superfamily. MDH type 3 family.

It catalyses the reaction (S)-malate + NAD(+) = oxaloacetate + NADH + H(+). Its function is as follows. Catalyzes the reversible oxidation of malate to oxaloacetate. The chain is Malate dehydrogenase from Dehalococcoides mccartyi (strain CBDB1).